The following is a 258-amino-acid chain: Regulatory protein RecX (258 aa).

The protein belongs to the RecX family.

It is found in the cytoplasm. In terms of biological role, modulates RecA activity. The sequence is that of Regulatory protein RecX from Streptococcus pneumoniae (strain P1031).